The following is a 179-amino-acid chain: Deoxyuridine 5'-triphosphate nucleotidohydrolase (179 aa).

Residues 90–92 (RSG), Asn-103, 107–109 (TVD), and Lys-117 each bind substrate.

This sequence belongs to the dUTPase family. Requires Mg(2+) as cofactor.

The catalysed reaction is dUTP + H2O = dUMP + diphosphate + H(+). It participates in pyrimidine metabolism; dUMP biosynthesis; dUMP from dCTP (dUTP route): step 2/2. In terms of biological role, this enzyme is involved in nucleotide metabolism: it produces dUMP, the immediate precursor of thymidine nucleotides and it decreases the intracellular concentration of dUTP so that uracil cannot be incorporated into DNA. The chain is Deoxyuridine 5'-triphosphate nucleotidohydrolase from Thermobifida fusca (strain YX).